We begin with the raw amino-acid sequence, 361 residues long: Riboflavin biosynthesis protein RibD (361 aa).

The 122-residue stretch at 1–122 (MEEYYMKLAL…MMKEAGIEVR (122 aa)) folds into the CMP/dCMP-type deaminase domain. The tract at residues 1–144 (MEEYYMKLAL…EKFLHFMRTG (144 aa)) is deaminase. A Zn(2+)-binding site is contributed by histidine 49. Glutamate 51 functions as the Proton donor in the catalytic mechanism. Zn(2+)-binding residues include cysteine 74 and cysteine 83. Positions 145-361 (LPYVTLKAAA…IKLTAKPTKE (217 aa)) are reductase. Alanine 153 contributes to the NADP(+) binding site. Serine 167 lines the substrate pocket. Tryptophan 169 is an NADP(+) binding site. Arginine 183 is a binding site for substrate. Residues threonine 195 and aspartate 199 each coordinate NADP(+). Leucine 203 and arginine 206 together coordinate substrate. NADP(+) is bound at residue threonine 221. Glutamate 290 serves as a coordination point for substrate. 292 to 298 (GSAVHGS) is a binding site for NADP(+).

It in the N-terminal section; belongs to the cytidine and deoxycytidylate deaminase family. In the C-terminal section; belongs to the HTP reductase family. In terms of assembly, homotetramer. It depends on Zn(2+) as a cofactor.

The catalysed reaction is 2,5-diamino-6-hydroxy-4-(5-phosphoribosylamino)-pyrimidine + H2O + H(+) = 5-amino-6-(5-phospho-D-ribosylamino)uracil + NH4(+). The enzyme catalyses 5-amino-6-(5-phospho-D-ribitylamino)uracil + NADP(+) = 5-amino-6-(5-phospho-D-ribosylamino)uracil + NADPH + H(+). It functions in the pathway cofactor biosynthesis; riboflavin biosynthesis; 5-amino-6-(D-ribitylamino)uracil from GTP: step 2/4. It participates in cofactor biosynthesis; riboflavin biosynthesis; 5-amino-6-(D-ribitylamino)uracil from GTP: step 3/4. Converts 2,5-diamino-6-(ribosylamino)-4(3h)-pyrimidinone 5'-phosphate into 5-amino-6-(ribosylamino)-2,4(1h,3h)-pyrimidinedione 5'-phosphate. This chain is Riboflavin biosynthesis protein RibD (ribD), found in Bacillus subtilis (strain 168).